The following is a 551-amino-acid chain: Hydroxymethylpyrimidine/phosphomethylpyrimidine kinase THI21 (551 aa).

Position 64 (Gln-64) interacts with 4-amino-5-hydroxymethyl-2-methylpyrimidine.

This sequence in the N-terminal section; belongs to the ThiD family. The protein in the C-terminal section; belongs to the thiaminase-2 family.

The enzyme catalyses 4-amino-5-hydroxymethyl-2-methylpyrimidine + ATP = 4-amino-2-methyl-5-(phosphooxymethyl)pyrimidine + ADP + H(+). It carries out the reaction 4-amino-2-methyl-5-(phosphooxymethyl)pyrimidine + ATP = 4-amino-2-methyl-5-(diphosphooxymethyl)pyrimidine + ADP. It participates in cofactor biosynthesis; thiamine diphosphate biosynthesis; 4-amino-2-methyl-5-diphosphomethylpyrimidine from 5-amino-1-(5-phospho-D-ribosyl)imidazole: step 2/3. The protein operates within cofactor biosynthesis; thiamine diphosphate biosynthesis; 4-amino-2-methyl-5-diphosphomethylpyrimidine from 5-amino-1-(5-phospho-D-ribosyl)imidazole: step 3/3. In terms of biological role, catalyzes the phosphorylation of hydroxymethylpyrimidine phosphate (HMP-P) to HMP-PP, and also probably that of HMP to HMP-P. This Saccharomyces cerevisiae (strain ATCC 204508 / S288c) (Baker's yeast) protein is Hydroxymethylpyrimidine/phosphomethylpyrimidine kinase THI21 (THI21).